The sequence spans 119 residues: Polyhedrin (119 aa).

It belongs to the polyhedrin family.

Its function is as follows. Major component of the virus occlusion bodies, which are large proteinaceous structures (polyhedra), that protect the virus from the outside environment for extended periods until they are ingested by insect larvae. The protein is Polyhedrin (PH) of Antheraea pernyi nuclear polyhedrosis virus (ApNPV).